The primary structure comprises 349 residues: Isopentenyl-diphosphate delta-isomerase (349 aa).

9–10 (RK) contacts substrate. FMN-binding positions include 65–67 (AMT), serine 95, and asparagine 124. 95 to 97 (STH) lines the substrate pocket. Residue glutamine 154 participates in substrate binding. Glutamate 155 is a Mg(2+) binding site. FMN contacts are provided by residues lysine 186, serine 211, threonine 216, 262–264 (GLR), and 283–284 (SR).

Belongs to the IPP isomerase type 2 family. As to quaternary structure, homooctamer. Dimer of tetramers. FMN is required as a cofactor. NADPH serves as cofactor. Requires Mg(2+) as cofactor.

The protein localises to the cytoplasm. The catalysed reaction is isopentenyl diphosphate = dimethylallyl diphosphate. Involved in the biosynthesis of isoprenoids. Catalyzes the 1,3-allylic rearrangement of the homoallylic substrate isopentenyl (IPP) to its allylic isomer, dimethylallyl diphosphate (DMAPP). The protein is Isopentenyl-diphosphate delta-isomerase of Staphylococcus aureus (strain USA300 / TCH1516).